Here is a 521-residue protein sequence, read N- to C-terminus: Adenosylhomocysteinase-like 1 (521 aa).

The interval 1–92 (MNNLADTVVV…EKVQKNSKGS (92 aa)) is disordered. Positions 54–73 (RSLSASSTDSFSSASYTGSS) are enriched in low complexity. Residues D220 and E245 each contribute to the substrate site. 246-248 (SVT) contributes to the NAD(+) binding site. Substrate contacts are provided by K275 and D279. NAD(+) is bound by residues 311-316 (GDVGKG), E332, 388-390 (MGH), N435, K515, 515-519 (KPNYY), and Y519.

It belongs to the adenosylhomocysteinase family. In terms of assembly, interacts with Ahcy; the interaction may negatively regulate Ahcy catalytic activity. NAD(+) is required as a cofactor.

In terms of biological role, might play a role in the regulation of methionine metabolism possibly by binding and inactivating Ahcy. The chain is Adenosylhomocysteinase-like 1 from Drosophila melanogaster (Fruit fly).